A 417-amino-acid chain; its full sequence is DNA primase DnaG (417 aa).

One can recognise a Toprim domain in the interval 171–257 (DAIIIVEGRA…SVEDMARKEI (87 aa)). 3 residues coordinate Mg(2+): Glu177, Asp219, and Asp221. Positions 278 to 325 (VPGEKRTQDLRPQKPGASEQNSIKKENVENENESTPTSFEPISEPAPP) are disordered. Residues 279 to 289 (PGEKRTQDLRP) are compositionally biased toward basic and acidic residues.

Belongs to the archaeal DnaG primase family. Forms a ternary complex with MCM helicase and DNA. Requires Mg(2+) as cofactor.

The enzyme catalyses ssDNA + n NTP = ssDNA/pppN(pN)n-1 hybrid + (n-1) diphosphate.. In terms of biological role, RNA polymerase that catalyzes the synthesis of short RNA molecules used as primers for DNA polymerase during DNA replication. This chain is DNA primase DnaG, found in Methanosphaerula palustris (strain ATCC BAA-1556 / DSM 19958 / E1-9c).